A 160-amino-acid chain; its full sequence is 2-C-methyl-D-erythritol 2,4-cyclodiphosphate synthase (160 aa).

A divalent metal cation is bound by residues D11 and H13. 4-CDP-2-C-methyl-D-erythritol 2-phosphate is bound by residues D11–H13 and H37–S38. Residue H45 participates in a divalent metal cation binding. Residues D59–G61, T135–E138, and R145 each bind 4-CDP-2-C-methyl-D-erythritol 2-phosphate.

This sequence belongs to the IspF family. In terms of assembly, homotrimer. A divalent metal cation serves as cofactor.

It catalyses the reaction 4-CDP-2-C-methyl-D-erythritol 2-phosphate = 2-C-methyl-D-erythritol 2,4-cyclic diphosphate + CMP. It participates in isoprenoid biosynthesis; isopentenyl diphosphate biosynthesis via DXP pathway; isopentenyl diphosphate from 1-deoxy-D-xylulose 5-phosphate: step 4/6. Involved in the biosynthesis of isopentenyl diphosphate (IPP) and dimethylallyl diphosphate (DMAPP), two major building blocks of isoprenoid compounds. Catalyzes the conversion of 4-diphosphocytidyl-2-C-methyl-D-erythritol 2-phosphate (CDP-ME2P) to 2-C-methyl-D-erythritol 2,4-cyclodiphosphate (ME-CPP) with a corresponding release of cytidine 5-monophosphate (CMP). The protein is 2-C-methyl-D-erythritol 2,4-cyclodiphosphate synthase of Nostoc punctiforme (strain ATCC 29133 / PCC 73102).